Consider the following 565-residue polypeptide: FAD-linked oxidoreductase ZEB1 (565 aa).

Residues 1–27 (MKLSPSKYLPVLLGTLSLTIANPSADC) form the signal peptide. Residues Asn46, Asn82, and Asn100 are each glycosylated (N-linked (GlcNAc...) asparagine). In terms of domain architecture, FAD-binding PCMH-type spans 115 to 293 (LGNYVSYAIA…ISMTVKAHPG (179 aa)). Residues Asn340, Asn352, and Asn421 are each glycosylated (N-linked (GlcNAc...) asparagine).

This sequence belongs to the oxygen-dependent FAD-linked oxidoreductase family.

It participates in mycotoxin biosynthesis. In terms of biological role, FAD-linked oxidoreductase; part of the gene cluster that mediates the biosynthesis of zearalenone (ZEA), a nonsteroid estrogen that is a contaminant of cereal grains and causes estrogenic disorders in humans and animals. The ZEA backbone is synthesized from a single acetyl-CoA molecule and eight malonyl-CoA molecules. The reducing polyketide synthase ZEA2 is proposed to synthesize a reduced hexaketide intermediate by using different combinations of its reductive domains during each round of condensation. The hexaketide thioester is then transacylated to the non-reducing polyketide synthase ZEA1 and is further condensed with three malonyl-CoAs without reductive tailoring to yield a mixed reduced/unreduced nonaketide. ZEA1 must be able to interact with ZEA2 to facilitate starter-unit acyltransfer and initiate polyketide biosynthesis. ZEA1 also mediates the required C2-C7 cyclization to form the resorcylate core and catalyzes the formation of the macrolactone. ZEB1 is then responsible for the chemical conversion of beta-zearalenonol (beta-ZOL) to ZEA in the biosynthetic pathway. This chain is FAD-linked oxidoreductase ZEB1, found in Gibberella zeae (strain ATCC MYA-4620 / CBS 123657 / FGSC 9075 / NRRL 31084 / PH-1) (Wheat head blight fungus).